The primary structure comprises 292 residues: Aquaporin PIP1-3/PIP1-4 (292 aa).

Positions 1–42 (MEGKEEDVRLGANKFSERQPIGTAAQGAGAGDDDKDYKEPPP) are disordered. 2 consecutive transmembrane segments (helical) span residues 61–81 (IAEF…VMGV) and 96–118 (IAWS…SGGH). Positions 120–122 (NPA) match the NPA 1 motif. A run of 3 helical transmembrane segments spans residues 139–159 (IFYI…VKGF), 181–201 (GDGL…VFSA), and 215–235 (ILAP…TIPI). The NPA 2 signature appears at 241-243 (NPA). Residues 263 to 283 (IFWVGPFIGAALAAIYHQVII) traverse the membrane as a helical segment.

This sequence belongs to the MIP/aquaporin (TC 1.A.8) family. PIP (TC 1.A.8.11) subfamily.

Its subcellular location is the cell membrane. Functionally, aquaporins facilitate the transport of water and small neutral solutes across cell membranes. The sequence is that of Aquaporin PIP1-3/PIP1-4 (PIP1-3) from Zea mays (Maize).